The sequence spans 425 residues: Glycosyl hydrolase family 109 protein 2 (425 aa).

NAD(+)-binding positions include 29-30 (NR), glutamate 51, 99-102 (WLTH), 119-120 (EV), and asparagine 148. Tyrosine 177 serves as a coordination point for substrate. Residues 194–198 (FHNHW) and tyrosine 211 contribute to the NAD(+) site. Substrate-binding positions include 211-214 (YPTH) and tyrosine 293.

Belongs to the Gfo/Idh/MocA family. Glycosyl hydrolase 109 subfamily. NAD(+) serves as cofactor.

Its function is as follows. Glycosidase. In Bacteroides fragilis (strain YCH46), this protein is Glycosyl hydrolase family 109 protein 2.